The primary structure comprises 663 residues: A-type ATP synthase subunit I (663 aa).

7 helical membrane-spanning segments follow: residues 376-396 (FFFG…IVAA), 412-432 (FAYI…LFGS), 468-488 (LAAL…GFVI), 497-517 (GAVF…LLAS), 534-554 (IALF…LMII), 568-588 (ARLM…NVLV), and 589-609 (GMVW…IIFF).

Belongs to the V-ATPase 116 kDa subunit family. As to quaternary structure, has multiple subunits with at least A(3), B(3), C, D, E, F, H, I and proteolipid K(x).

Its subcellular location is the cell membrane. Its function is as follows. Component of the A-type ATP synthase that produces ATP from ADP in the presence of a proton gradient across the membrane. In Thermococcus kodakarensis (strain ATCC BAA-918 / JCM 12380 / KOD1) (Pyrococcus kodakaraensis (strain KOD1)), this protein is A-type ATP synthase subunit I.